The following is a 37-amino-acid chain: Large ribosomal subunit protein bL36 (37 aa).

Belongs to the bacterial ribosomal protein bL36 family.

The protein is Large ribosomal subunit protein bL36 of Alkaliphilus metalliredigens (strain QYMF).